Consider the following 251-residue polypeptide: uncharacterized protein (251 aa).

The Response regulatory domain maps to 3–118 (KVVICDDERI…QLEHILDILV (116 aa)). Position 55 is a 4-aspartylphosphate (Asp-55). An HTH araC/xylS-type domain is found at 152–249 (NQILSQIKQH…HMSPSDYNKL (98 aa)). DNA-binding regions (H-T-H motif) lie at residues 169–190 (LDLI…KEHV) and 216–239 (HYEI…KKYL).

In terms of processing, phosphorylated by SE_0166.

It is found in the cytoplasm. Functionally, probable member of the two-component regulatory system SE_0166/SE_0165. This is an uncharacterized protein from Staphylococcus epidermidis (strain ATCC 12228 / FDA PCI 1200).